Consider the following 154-residue polypeptide: Jupiter microtubule associated homolog 1 (154 aa).

Met1 carries the N-acetylmethionine modification. A compositionally biased stretch (polar residues) spans 1 to 19 (MTTTTTFKGVDPNSRNSSR). Residues 1–154 (MTTTTTFKGV…PGGKSSLVLG (154 aa)) are disordered. Thr2 carries the post-translational modification N-acetylthreonine; in Hematological and neurological expressed 1 protein, N-terminally processed. Residues Ser28 and Ser31 each carry the phosphoserine modification. Positions 47–59 (MASNIFGTPEENQ) are enriched in polar residues. Phosphothreonine is present on Thr54. Low complexity predominate over residues 60–71 (ASWAKSAGAKSS). Phosphoserine is present on residues Ser71, Ser80, Ser87, Ser88, and Ser92. Positions 80–91 (SGLQRRNSSEAS) are enriched in polar residues. A compositionally biased stretch (basic and acidic residues) spans 96–108 (LDLKGEGDIHENV). Over residues 125–138 (PAAPVPSPVAPAPV) the composition is skewed to pro residues. The residue at position 131 (Ser131) is a Phosphoserine. Lys148 is subject to N6-acetyllysine.

Belongs to the JUPITER family. Interacts with the complex composed, at least, of APC, CTNNB1 and GSK3B; the interaction takes place with the inactive form of GSK3B (phosphorylated at 'Ser-9'). In terms of tissue distribution, expressed in testis, skeletal muscle, thymus, prostate, colon, peripheral blood cells, brain and placenta.

It localises to the nucleus. Its subcellular location is the cytoplasm. Modulates negatively AKT-mediated GSK3B signaling. Induces CTNNB1 'Ser-33' phosphorylation and degradation through the suppression of the inhibitory 'Ser-9' phosphorylation of GSK3B, which represses the function of the APC:CTNNB1:GSK3B complex and the interaction with CDH1/E-cadherin in adherent junctions. Plays a role in the regulation of cell cycle and cell adhesion. Has an inhibitory role on AR-signaling pathway through the induction of receptor proteasomal degradation. The protein is Jupiter microtubule associated homolog 1 of Homo sapiens (Human).